A 142-amino-acid polypeptide reads, in one-letter code: Universal stress protein G (142 aa).

The protein belongs to the universal stress protein A family.

The chain is Universal stress protein G (uspG) from Shigella flexneri.